The chain runs to 316 residues: Mannose-6-phosphate isomerase (316 aa).

Zn(2+) is bound by residues Gln95, His97, Glu114, and His171. Arg191 is an active-site residue.

It belongs to the mannose-6-phosphate isomerase type 1 family. Requires Zn(2+) as cofactor.

It catalyses the reaction D-mannose 6-phosphate = D-fructose 6-phosphate. This Streptococcus mutans serotype c (strain ATCC 700610 / UA159) protein is Mannose-6-phosphate isomerase (pmi).